Reading from the N-terminus, the 273-residue chain is NH(3)-dependent NAD(+) synthetase (273 aa).

47–54 contributes to the ATP binding site; that stretch reads GISGGQDS. D53 is a Mg(2+) binding site. R139 contributes to the deamido-NAD(+) binding site. T159 provides a ligand contact to ATP. E164 is a Mg(2+) binding site. Deamido-NAD(+) is bound by residues K172 and D179. Residues K188 and T210 each contribute to the ATP site. 259-260 contacts deamido-NAD(+); it reads HK.

Belongs to the NAD synthetase family. As to quaternary structure, homodimer.

The enzyme catalyses deamido-NAD(+) + NH4(+) + ATP = AMP + diphosphate + NAD(+) + H(+). It functions in the pathway cofactor biosynthesis; NAD(+) biosynthesis; NAD(+) from deamido-NAD(+) (ammonia route): step 1/1. Functionally, catalyzes the ATP-dependent amidation of deamido-NAD to form NAD. Uses ammonia as a nitrogen source. The polypeptide is NH(3)-dependent NAD(+) synthetase (Staphylococcus aureus (strain COL)).